The chain runs to 285 residues: Inositol oxygenase (285 aa).

A substrate-binding site is contributed by R29. S33 is modified (phosphoserine). 85 to 87 is a substrate binding site; sequence DES. Positions 98, 123, and 124 each coordinate Fe cation. Substrate is bound by residues K127 and 141 to 142; that span reads GD. Fe cation is bound by residues H194, H220, and D253. 220–221 is a binding site for substrate; that stretch reads HS.

It belongs to the myo-inositol oxygenase family. Requires Fe cation as cofactor. As to expression, kidney specific.

It localises to the cytoplasm. It carries out the reaction myo-inositol + O2 = D-glucuronate + H2O + H(+). The protein operates within polyol metabolism; myo-inositol degradation into D-glucuronate; D-glucuronate from myo-inositol: step 1/1. This Homo sapiens (Human) protein is Inositol oxygenase (MIOX).